Consider the following 376-residue polypeptide: Putative glutamate--cysteine ligase 2-3 (376 aa).

It belongs to the glutamate--cysteine ligase type 2 family. YbdK subfamily.

The enzyme catalyses L-cysteine + L-glutamate + ATP = gamma-L-glutamyl-L-cysteine + ADP + phosphate + H(+). In terms of biological role, ATP-dependent carboxylate-amine ligase which exhibits weak glutamate--cysteine ligase activity. This is Putative glutamate--cysteine ligase 2-3 from Nocardioides sp. (strain ATCC BAA-499 / JS614).